We begin with the raw amino-acid sequence, 815 residues long: Glycogen phosphorylase (815 aa).

Residue lysine 662 is modified to N6-(pyridoxal phosphate)lysine.

Belongs to the glycogen phosphorylase family. Pyridoxal 5'-phosphate is required as a cofactor.

It carries out the reaction [(1-&gt;4)-alpha-D-glucosyl](n) + phosphate = [(1-&gt;4)-alpha-D-glucosyl](n-1) + alpha-D-glucose 1-phosphate. In terms of biological role, phosphorylase is an important allosteric enzyme in carbohydrate metabolism. Enzymes from different sources differ in their regulatory mechanisms and in their natural substrates. However, all known phosphorylases share catalytic and structural properties. The protein is Glycogen phosphorylase (glgP) of Shigella flexneri.